A 172-amino-acid polypeptide reads, in one-letter code: Adenine phosphoribosyltransferase (172 aa).

It belongs to the purine/pyrimidine phosphoribosyltransferase family. In terms of assembly, homodimer.

Its subcellular location is the cytoplasm. The catalysed reaction is AMP + diphosphate = 5-phospho-alpha-D-ribose 1-diphosphate + adenine. It functions in the pathway purine metabolism; AMP biosynthesis via salvage pathway; AMP from adenine: step 1/1. Functionally, catalyzes a salvage reaction resulting in the formation of AMP, that is energically less costly than de novo synthesis. The polypeptide is Adenine phosphoribosyltransferase (Streptococcus thermophilus (strain ATCC BAA-250 / LMG 18311)).